A 101-amino-acid chain; its full sequence is Chaperone modulatory protein CbpM (101 aa).

Belongs to the CbpM family.

Its function is as follows. Interacts with CbpA and inhibits both the DnaJ-like co-chaperone activity and the DNA binding activity of CbpA. Together with CbpA, modulates the activity of the DnaK chaperone system. Does not inhibit the co-chaperone activity of DnaJ. This Pseudomonas putida (strain ATCC 700007 / DSM 6899 / JCM 31910 / BCRC 17059 / LMG 24140 / F1) protein is Chaperone modulatory protein CbpM.